Consider the following 312-residue polypeptide: Transcription factor Ouib (312 aa).

One can recognise a ZAD domain in the interval 4–79 (IVCRVCGRQK…IKTQTKWLTI (76 aa)). Cysteine 6, cysteine 9, cysteine 52, and cysteine 55 together coordinate Zn(2+). 5 consecutive C2H2-type zinc fingers follow at residues 167 to 189 (YICELCGTHATSKPTFQRHMRKH), 195 to 217 (FGCKDCDARFLSAGELRAHHRVH), 223 to 245 (FACRFCEKRYVSYMGRLIHERTH), 251 to 273 (YVCEECGKKFTTAYVLKNHMVIH), and 279 to 303 (FRCDICDRSFQRKAHLVTHTRSMMH).

Expressed predominantly in the prothoracic gland during embryonic and larval development.

Its subcellular location is the nucleus. In terms of biological role, transcription factor required for ecdysteroid production in the prothoracic gland by activating transcription of the ecdysteroid biosynthesis gene spok. Binds to the 5'-AGCTTTATTATTTAG-3' DNA sequence in the spok enhancer region. This chain is Transcription factor Ouib, found in Drosophila melanogaster (Fruit fly).